The primary structure comprises 180 residues: Probable cobalt-precorrin-6B C(15)-methyltransferase (decarboxylating) (180 aa).

S-adenosyl-L-methionine contacts are provided by residues Thr16, 40–44, Asp61, and Ala89; that span reads GCGSG.

The protein belongs to the methyltransferase superfamily. Archaeal-type CbiT family.

The enzyme catalyses Co-precorrin-6B + S-adenosyl-L-methionine = Co-precorrin-7 + S-adenosyl-L-homocysteine + CO2. The protein operates within cofactor biosynthesis; adenosylcobalamin biosynthesis; cob(II)yrinate a,c-diamide from sirohydrochlorin (anaerobic route): step 8/10. Catalyzes the methylation of C-15 in cobalt-precorrin-6B followed by the decarboxylation of C-12 to form cobalt-precorrin-7. The sequence is that of Probable cobalt-precorrin-6B C(15)-methyltransferase (decarboxylating) from Methanococcus vannielii (strain ATCC 35089 / DSM 1224 / JCM 13029 / OCM 148 / SB).